Consider the following 155-residue polypeptide: Ribosome maturation factor RimP (155 aa).

It belongs to the RimP family.

It is found in the cytoplasm. Functionally, required for maturation of 30S ribosomal subunits. The protein is Ribosome maturation factor RimP of Prochlorococcus marinus (strain SARG / CCMP1375 / SS120).